Reading from the N-terminus, the 307-residue chain is Alpha N-terminal protein methyltransferase 1 (307 aa).

Low complexity predominate over residues 38 to 51; it reads EPAPAPAAGSNGVA. Residues 38–60 form a disordered region; it reads EPAPAPAAGSNGVAGEEEAGGGG. Residues Gly-123, Arg-128, 145-147, 179-180, and Gln-195 contribute to the S-adenosyl-L-methionine site; these read EPV and LQ.

The protein belongs to the methyltransferase superfamily. NTM1 family.

It carries out the reaction N-terminal L-alanyl-L-prolyl-L-lysyl-[protein] + 3 S-adenosyl-L-methionine = N-terminal N,N,N-trimethyl-L-alanyl-L-prolyl-L-lysyl-[protein] + 3 S-adenosyl-L-homocysteine + 3 H(+). The catalysed reaction is N-terminal L-seryl-L-prolyl-L-lysyl-[protein] + 3 S-adenosyl-L-methionine = N-terminal N,N,N-trimethyl-L-seryl-L-prolyl-L-lysyl-[protein] + 3 S-adenosyl-L-homocysteine + 3 H(+). The enzyme catalyses N-terminal L-prolyl-L-prolyl-L-lysyl-[protein] + 2 S-adenosyl-L-methionine = N-terminal N,N-dimethyl-L-prolyl-L-prolyl-L-lysyl-[protein] + 2 S-adenosyl-L-homocysteine + 2 H(+). Functionally, alpha-N-methyltransferase that methylates the N-terminus of target proteins containing the N-terminal motif [Ala/Pro/Ser]-Pro-Lys when the initiator Met is cleaved. Specifically catalyzes mono-, di- or tri-methylation of exposed alpha-amino group of Ala or Ser residue in the [Ala/Ser]-Pro-Lys motif and mono- or di-methylation of Pro in the Pro-Pro-Lys motif. The sequence is that of Alpha N-terminal protein methyltransferase 1 from Oryza sativa subsp. japonica (Rice).